The sequence spans 562 residues: Tetratricopeptide repeat protein 34 (562 aa).

Residues 1–30 (MLHKKPQRANENGISQRKKPSDQDNSSVKE) form a disordered region. Residues 19–30 (KPSDQDNSSVKE) show a composition bias toward basic and acidic residues. 8 TPR repeats span residues 51–84 (DVSRILCTDALYQLDRIEEAHKMLSLALSNSSQR), 175–208 (KDSLLARARCYGQLGQKKTAIFDFNAILKDEPYN), 210–242 (EALSGKGFMHLTLNQQKEAVHDICLAIKADASY), 304–337 (AHFHILYTDILIAKEKYDEAFNYLRKSFNGNAID), 388–421 (FQAAGQEGNSLIQENQHEKALDYYSLAVISSNNN), 423–455 (KYLRQRAMCLTHLRDYSSAIKDIDKAILRHSSH), 461–494 (AEDYCSKGHILLLSCDEDAATTQYMKAISMEHAS), and 509–542 (AGIFSQVANRYFEQRLFEESWKMSECGLLIDENN).

The protein is Tetratricopeptide repeat protein 34 (ttc34) of Xenopus laevis (African clawed frog).